Here is a 347-residue protein sequence, read N- to C-terminus: Fused nickel transport protein NikMN (347 aa).

9 consecutive transmembrane segments (helical) span residues 6 to 26 (GYLSPVTCAVTFAATVPFWYV), 40 to 60 (LPLVALVAAFSFVIMMFNLPI), 73 to 93 (IAAVLLGPWAAVPAISVALLI), 96 to 116 (IFFGDGGITAFGANCLNMAVV), 140 to 160 (VIMAGLASYAGLNAAALLAAV), 185 to 205 (VAVPAMALTHLTIAGAAEFIV), 236 to 256 (LWAGIGALVVLCPLGLIAAGT), 273 to 293 (AAMAGASGGVAPPAGLPGGFA), and 319 to 339 (VLSALLGVALIVAGIGLSAGL).

Belongs to the CbiM family. NikM subfamily. As to quaternary structure, forms an energy-coupling factor (ECF) transporter complex composed of an ATP-binding protein (A component, NikO), a transmembrane protein (T component, NikQ) and a fused possible substrate-capture protein (S component, NikMN) of unknown stoichimetry.

It localises to the cell inner membrane. Functionally, part of the energy-coupling factor (ECF) transporter complex NikMNQO involved in nickel import. The complex confers nickel uptake upon expression in E.coli; can also transport cobalt with a very low affinity. The chain is Fused nickel transport protein NikMN (nikMN) from Rhodobacter capsulatus (strain ATCC BAA-309 / NBRC 16581 / SB1003).